The chain runs to 1151 residues: Zinc finger protein ZFPM2 (1151 aa).

A compositionally biased stretch (basic residues) spans 1–13; it reads MSRRKQSKPRQIK. A disordered region spans residues 1–102; it reads MSRRKQSKPR…ETDDWDGPGE (102 aa). Acidic residues-rich tracts occupy residues 18–33 and 70–82; these read DAIE…EETD and EGIQ…DGDT. The segment at 244-277 adopts a CCHC FOG-type 1 zinc-finger fold; that stretch reads IVNKDIFPCKSCGIWYRSERNLQAHLMYYCSGRQ. Residues Cys-252, Cys-255, His-268, and Cys-273 each coordinate Zn(2+). Residues 296–320 form a C2H2-type 1 zinc finger; it reads SLCPFPQCTKSFSNARALEMHLNSH. A Glycyl lysine isopeptide (Lys-Gly) (interchain with G-Cter in SUMO1) cross-link involves residue Lys-324. 2 consecutive C2H2-type zinc fingers follow at residues 335–357 and 363–385; these read LKCT…LFSH and FRCN…QELH. Residues 389–487 form a disordered region; that stretch reads GKLPRESDME…RLASSPVQPN (99 aa). 2 stretches are compositionally biased toward polar residues: residues 401–410 and 419–431; these read PSATEDSLQP and ELPQ…QTKD. Lys-444 is covalently cross-linked (Glycyl lysine isopeptide (Lys-Gly) (interchain with G-Cter in SUMO2)). The segment covering 447 to 485 has biased composition (polar residues); sequence LFLTNQRPEIQPTTNKQSFSYTKIKSEPSSPRLASSPVQ. A Glycyl lysine isopeptide (Lys-Gly) (interchain with G-Cter in SUMO1) cross-link involves residue Lys-471. Residue Ser-532 is modified to Phosphoserine. The segment at 542 to 575 adopts a CCHC FOG-type 2 zinc-finger fold; the sequence is PLMPKGATCFECNITFNNLDNYLVHKKHYCSSRW. Zn(2+) contacts are provided by Cys-550, Cys-553, His-566, and Cys-571. Residue Ser-581 is modified to Phosphoserine. Positions 636–683 are disordered; it reads GPNGKGHDKDFSTQTKKLSTSSNNDDKINGKPVDVKNPSVPLVDGESD. Residues 647 to 658 show a composition bias toward polar residues; that stretch reads STQTKKLSTSSN. A CCHC FOG-type 3 zinc finger spans residues 681-714; that stretch reads ESDPNKTTCEACNITFSRHETYMVHKQYYCATRH. 4 residues coordinate Zn(2+): Cys-689, Cys-692, His-705, and Cys-710. A Nuclear localization signal motif is present at residues 736–740; it reads RKRRK. Residues 829–835 are interaction with CTBP2; that stretch reads PIDLSKK. The CCHC FOG-type 4 zinc-finger motif lies at 848–881; that stretch reads KRLLDYHECTVCKISFNKVENYLAHKQNFCPVTA. 4 residues coordinate Zn(2+): Cys-856, Cys-859, His-872, and Cys-877. Phosphoserine is present on Ser-904. Residues Lys-915 and Lys-955 each participate in a glycyl lysine isopeptide (Lys-Gly) (interchain with G-Cter in SUMO1) cross-link. Residue Ser-1014 is modified to Phosphoserine. A disordered region spans residues 1051 to 1095; it reads DERPAANPQQENISQNPQHEDDHKSPSWISENPLAANENVSPGIP. Over residues 1057 to 1067 the composition is skewed to polar residues; the sequence is NPQQENISQNP. A CCHC FOG-type 5 zinc finger spans residues 1113–1146; that stretch reads QAPTSGKYCRLCDIQFNNLSNFITHKKFYCSSHA. Residues Cys-1121, Cys-1124, His-1137, and Cys-1142 each contribute to the Zn(2+) site.

The protein belongs to the FOG (Friend of GATA) family. In terms of assembly, interacts with the N-terminal zinc-finger of GATA4, GATA5 and probably GATA6. Interacts with retinoid nuclear receptor RXRA when ligand bound. Interacts with corepressor CTBP2; this interaction is however not essential for corepressor activity. Able to bind GATA1 in vitro. Interacts with NR2F2 and NR2F6. Interacts with ATOH8; mediates indirect interaction with GATA4. In terms of processing, sumoylation reduces transcriptional repression activity. Widely expressed at low level.

It localises to the nucleus. Transcription regulator that plays a central role in heart morphogenesis and development of coronary vessels from epicardium, by regulating genes that are essential during cardiogenesis. Essential cofactor that acts via the formation of a heterodimer with transcription factors of the GATA family GATA4, GATA5 and GATA6. Such heterodimer can both activate or repress transcriptional activity, depending on the cell and promoter context. Also required in gonadal differentiation, possibly be regulating expression of SRY. Probably acts a corepressor of NR2F2. This is Zinc finger protein ZFPM2 (ZFPM2) from Homo sapiens (Human).